The primary structure comprises 61 residues: Small ribosomal subunit protein uS14 (61 aa).

Zn(2+)-binding residues include C24, C27, C40, and C43.

It belongs to the universal ribosomal protein uS14 family. Zinc-binding uS14 subfamily. Part of the 30S ribosomal subunit. Contacts proteins S3 and S10. The cofactor is Zn(2+).

Binds 16S rRNA, required for the assembly of 30S particles and may also be responsible for determining the conformation of the 16S rRNA at the A site. This is Small ribosomal subunit protein uS14 from Clostridium acetobutylicum (strain ATCC 824 / DSM 792 / JCM 1419 / IAM 19013 / LMG 5710 / NBRC 13948 / NRRL B-527 / VKM B-1787 / 2291 / W).